Here is a 2968-residue protein sequence, read N- to C-terminus: Polyketide synthase 37 (2968 aa).

The region spanning 32 to 454 (KEPIAIIGIG…GSNSSLFLSS (423 aa)) is the Ketosynthase family 3 (KS3) domain. Catalysis depends on for beta-ketoacyl synthase activity residues cysteine 198, histidine 338, and histidine 378. A malonyl-CoA:ACP transacylase (MAT) domain region spans residues 624-950 (FIFSGQGQQW…LSTLSKNSNS (327 aa)). Serine 718 functions as the For malonyltransferase activity in the catalytic mechanism. The interval 1017–1157 (PPMFISLDRK…GIIKYGTNYL (141 aa)) is N-terminal hotdog fold. The region spanning 1017–1350 (PPMFISLDRK…FKGINSSSSS (334 aa)) is the PKS/mFAS DH domain. The segment at 1031 to 1345 (TPSFEVRLNQ…LTNLEFKGIN (315 aa)) is dehydratase (DH) domain. The active-site Proton acceptor; for dehydratase activity is histidine 1049. A C-terminal hotdog fold region spans residues 1183-1350 (FKSFNSNEFY…FKGINSSSSS (168 aa)). The Proton donor; for dehydratase activity role is filled by aspartate 1257. The tract at residues 1522-1547 (SCGGGGGSTNNTISNSSSSISSIDNG) is disordered. The segment covering 1530–1547 (TNNTISNSSSSISSIDNG) has biased composition (low complexity). The tract at residues 1718-2053 (GIISDLKIKQ…SGNHIGKILI (336 aa)) is enoyl reductase (ER) domain. Residues 2083–2277 (TYIFTGFGGL…LKSSCIHLAS (195 aa)) form a ketoreductase (KR) domain region. The disordered stretch occupies residues 2379–2400 (GDGSFDDLNQLEDEGQQGFGNG). Positions 2421–2498 (FDNDFYTKSI…STVELIKNKL (78 aa)) constitute a Carrier domain. At serine 2458 the chain carries O-(pantetheine 4'-phosphoryl)serine. The tract at residues 2568-2589 (SSSSNNSNSKNELTSPPPSAKR) is disordered. Residues 2707-2968 (ISHVVGVTST…IEAILFKLIK (262 aa)) are chalcone synthase. The active site involves cysteine 2747.

It depends on pantetheine 4'-phosphate as a cofactor.

The enzyme catalyses (E)-4-coumaroyl-CoA + 3 malonyl-CoA + 3 H(+) = 2',4,4',6'-tetrahydroxychalcone + 3 CO2 + 4 CoA. The catalysed reaction is hexanoyl-CoA + 3 malonyl-CoA + 3 H(+) = 2,4,6-trihydroxyphenylhexan-1-one + 3 CO2 + 4 CoA. It participates in secondary metabolite biosynthesis; flavonoid biosynthesis. Polyketide synthase; part of the gene cluster that mediates the biosynthesis of DIF-1 (Differentiation Inducing Factor-1), a signal molecule involved in the differentiation of pstO (prestalk-O) cells. The three-step process begins with the formation of (2,4,6-trihydroxyphenyl)-1-hexan-1-one (THPH) by the polyketide synthase StlB. THPH is then dichlorinated by the flavin-dependent halogenase ChlA. The last step of DIF-1 biosynthesis is the O-methylation of dichloro-THPH (or des-methyl-DIF-1) by the methyltransferase DmtA to yield DIF-1. This is Polyketide synthase 37 (StlB) from Dictyostelium discoideum (Social amoeba).